The sequence spans 1105 residues: Serine/threonine-protein kinase Warts (1105 aa).

Positions 33–54 (VQNNHRNNQNYTPLRYTATNGR) are enriched in polar residues. Disordered regions lie at residues 33–81 (VQNN…APDV), 145–253 (CSPA…TQNG), 273–362 (GGGS…YQAR), 383–462 (QTAV…EPPS), and 514–643 (AQRE…RKEF). A compositionally biased stretch (pro residues) spans 69–81 (MEPPPSASPAPDV). Over residues 242–253 (QRGNSPVITQNG) the composition is skewed to polar residues. Residues 307–320 (SMQSRQSPTQSQQS) are compositionally biased toward low complexity. The span at 325 to 343 (SPSSGIYSATSAGSPSPIT) shows a compositional bias: polar residues. Composition is skewed to low complexity over residues 387-400 (APQS…SNSP) and 415-437 (AAVV…QHQQ). The segment covering 515-533 (QRERDQRERDQRERERDQQ) has biased composition (basic and acidic residues). 2 stretches are compositionally biased toward low complexity: residues 551–576 (QSNN…SNSN) and 589–616 (NNNS…SSTS). A compositionally biased stretch (basic and acidic residues) spans 627-643 (PERKKISKEKEEERKEF). The region spanning 719 to 1020 (FVKLKPIGVG…VDEVKSHDFF (302 aa)) is the Protein kinase domain. ATP contacts are provided by residues 725 to 733 (IGVGAFGEV) and lysine 749. The Proton acceptor role is filled by aspartate 843. 2 disordered regions span residues 881–900 (GNHS…ENGP) and 1038–1070 (EIKH…DDVD). The AGC-kinase C-terminal domain occupies 1021-1091 (KGIDFADMRK…FTFRRFFDDK (71 aa)).

The protein belongs to the protein kinase superfamily. AGC Ser/Thr protein kinase family. Interacts with yki. Interacts with jub. Requires Mg(2+) as cofactor.

It is found in the cytoplasm. The protein resides in the cytosol. The protein localises to the cytoskeleton. Its subcellular location is the microtubule organizing center. It localises to the centrosome. The enzyme catalyses L-seryl-[protein] + ATP = O-phospho-L-seryl-[protein] + ADP + H(+). It catalyses the reaction L-threonyl-[protein] + ATP = O-phospho-L-threonyl-[protein] + ADP + H(+). Negative regulator of Yorkie (Yki) in the Hippo/SWH (Sav/Wts/Hpo) signaling pathway that plays a pivotal role in organ size control and tumor suppression by restricting proliferation and promoting apoptosis. The core of this pathway is composed of a kinase cascade wherein Hippo (Hpo), in complex with its regulatory protein Salvador (Sav), phosphorylates and activates Warts (Wts) in complex with its regulatory protein Mats, which in turn phosphorylates and inactivates the Yorkie (Yki) oncoprotein. The Hippo/SWH signaling pathway inhibits the activity of the transcriptional complex formed by Scalloped (sd) and Yki and the target genes of this pathway include cyclin-E (cycE), diap1 and bantam. Inhibits nuclear localization of Yki. Regulates salivary gland degradation in a PI3K-dependent manner and Yki- and Sd-independent, mechanism. In Drosophila melanogaster (Fruit fly), this protein is Serine/threonine-protein kinase Warts (wts).